We begin with the raw amino-acid sequence, 179 residues long: Protein TIFY 11a (179 aa).

The region spanning 62 to 97 (VDGGGQQFTIFYAGKVVVIDRCTPAMAAELMRFASA) is the Tify domain. The Jas motif lies at 115-140 (PIARKASLKRFLAKRKATPASARSSY). Residues 117–124 (ARKASLKR) carry the Nuclear localization signal motif.

The protein belongs to the TIFY/JAZ family. Interacts with BHLH148. Interacts with COI1A in a coronatine-dependent manner. Interacts with COI1B in a coronatine-dependent manner. Coronatine is an analog of jasmonoyl isoleucine (JA-Ile). Interacts with RSS3. Forms a ternary complex with RSS3 and BHLH094 in the nucleus. Interacts with BHLH062 and NINJA1. Interacts with MYB30. In terms of processing, ubiquitinated. Targeted for degradation by the SCF(COI1) E3 ubiquitin ligase-proteasome pathway during jasmonate signaling.

The protein resides in the nucleus. In terms of biological role, repressor of jasmonate (JA) responses. Forms a ternary complex with RSS3 and BHLH94 to negatively regulate JA-responsive genes. Acts as a positive regulator of tolerance to salt stress. Involved in salt tolerance by modulating potassium homeostasis through JA signaling and regulation of the expression of potassium ion transporter genes. Acts as a transcriptional regulator targeted by the SCF(COI1) E3 ubiquitin ligase complexes in the JA signaling pathway, and interacts with BHLH062 that may directly regulate the ion transporter genes. Acts as a positive regulator of tolerance to dehydration stress. Acts as a negative regulator of tolerance to cold stress by interacting with MYB30. The protein is Protein TIFY 11a of Oryza sativa subsp. japonica (Rice).